A 260-amino-acid chain; its full sequence is Snake venom serine protease KN6 (260 aa).

Positions 1–18 are cleaved as a signal peptide; that stretch reads MVLIRVLANLLILQLSYA. Residues 19–24 constitute a propeptide that is removed on maturation; sequence QKSSEL. One can recognise a Peptidase S1 domain in the interval 25–251; the sequence is VIGGDECNIN…HLDWIQSIIA (227 aa). Cystine bridges form between Cys-31-Cys-165, Cys-100-Cys-258, Cys-144-Cys-212, Cys-176-Cys-191, and Cys-202-Cys-227. Catalysis depends on His-67, which acts as the Charge relay system. Residue Asn-105 is glycosylated (N-linked (GlcNAc...) asparagine). The active-site Charge relay system is the Asp-112. Asn-172 is a glycosylation site (N-linked (GlcNAc...) asparagine). The active-site Charge relay system is the Ser-206. Asn-213 and Asn-255 each carry an N-linked (GlcNAc...) asparagine glycan.

It belongs to the peptidase S1 family. Snake venom subfamily. As to quaternary structure, monomer. Expressed by the venom gland.

It localises to the secreted. Snake venom serine protease that may act in the hemostasis system of the prey. The chain is Snake venom serine protease KN6 from Trimeresurus stejnegeri (Chinese green tree viper).